A 1437-amino-acid chain; its full sequence is Envelopment polyprotein (1437 aa).

Residues 1–21 form the signal peptide; that stretch reads MAISTSLLIVALLIKLCLVNT. Topologically, residues 22–207 are lumenal; the sequence is APPISKCFQD…GYMASSICQN (186 aa). N-linked (GlcNAc...) asparagine; by host glycosylation is found at Asn65 and Asn88. Residues 208 to 228 traverse the membrane as a helical segment; that stretch reads IELIIIIILTLAIFIFMCIIT. Residues 229-312 lie on the Cytoplasmic side of the membrane; the sequence is RTYICYLMLP…RVARSLCKSK (84 aa). Residues 313 to 333 form a helical membrane-spanning segment; it reads GSSLVISILTAMLILSFITPL. At 334 to 373 the chain is on the lumenal side; the sequence is EAMTTNYPDDKKFTLKEVNDIVLGRDMEQELKSSILILMS. A helical transmembrane segment spans residues 374–394; that stretch reads ICGIGIILIFFGLTVLLEIVL. The Cytoplasmic portion of the chain corresponds to 395 to 460; it reads ELIAKRSTIF…TYYIKIRNLK (66 aa). The helical transmembrane segment at 461–481 threads the bilayer; sequence LIMLIFSIVILMQNATMLVVA. The Lumenal segment spans residues 482–1391; sequence GENCWTNTEI…EPLNNFFGNY (910 aa). Residues Asn627 and Asn1173 are each glycosylated (N-linked (GlcNAc...) asparagine; by host). A helical transmembrane segment spans residues 1392-1412; sequence LNMFLYILGGIILLFLALYIL. At 1413 to 1437 the chain is on the cytoplasmic side; sequence MPMCARLRDELKRNERLHQMEMKKR.

The protein belongs to the orthobunyavirus envelope glycoprotein family. Glycoprotein C and Glycoprotein N interact with each other. Post-translationally, specific enzymatic cleavages in vivo yield mature proteins including nonstructural protein NSm, Glycoprotein C, and Glycoprotein N.

Its subcellular location is the virion membrane. It localises to the host Golgi apparatus membrane. The protein localises to the host endoplasmic reticulum membrane. In terms of biological role, glycoprotein C and Glycoprotein N interact with each other and are present at the surface of the virion. They are able to attach the virion to a cell receptor and to promote fusion of membranes after endocytosis of the virion. This Culex protein is Envelopment polyprotein (GP).